Reading from the N-terminus, the 152-residue chain is Small ribosomal subunit protein bS6 (152 aa).

The interval 96–152 (HEEGPSAMLQKRDRDDRGPREGGDRGPRREFGDRPPRRDGDFQRGPRPDRAPREDRA) is disordered.

The protein belongs to the bacterial ribosomal protein bS6 family.

In terms of biological role, binds together with bS18 to 16S ribosomal RNA. The polypeptide is Small ribosomal subunit protein bS6 (Rhizobium etli (strain ATCC 51251 / DSM 11541 / JCM 21823 / NBRC 15573 / CFN 42)).